A 354-amino-acid polypeptide reads, in one-letter code: Carbamoyl phosphate synthase small chain (354 aa).

Residues 1–167 (MEAVLILEDG…KEPKIHKTAN (167 aa)) are CPSase. Positions 45, 219, and 221 each coordinate L-glutamine. In terms of domain architecture, Glutamine amidotransferase type-1 spans 171–354 (RCVLIDCGVK…DEMIKLKDRK (184 aa)). Cysteine 246 functions as the Nucleophile in the catalytic mechanism. Residues leucine 247, glutamine 250, asparagine 288, glycine 290, and phenylalanine 291 each coordinate L-glutamine. Catalysis depends on residues histidine 330 and glutamate 332.

It belongs to the CarA family. In terms of assembly, composed of two chains; the small (or glutamine) chain promotes the hydrolysis of glutamine to ammonia, which is used by the large (or ammonia) chain to synthesize carbamoyl phosphate. Tetramer of heterodimers (alpha,beta)4.

It catalyses the reaction hydrogencarbonate + L-glutamine + 2 ATP + H2O = carbamoyl phosphate + L-glutamate + 2 ADP + phosphate + 2 H(+). It carries out the reaction L-glutamine + H2O = L-glutamate + NH4(+). It functions in the pathway amino-acid biosynthesis; L-arginine biosynthesis; carbamoyl phosphate from bicarbonate: step 1/1. The protein operates within pyrimidine metabolism; UMP biosynthesis via de novo pathway; (S)-dihydroorotate from bicarbonate: step 1/3. Functionally, small subunit of the glutamine-dependent carbamoyl phosphate synthetase (CPSase). CPSase catalyzes the formation of carbamoyl phosphate from the ammonia moiety of glutamine, carbonate, and phosphate donated by ATP, constituting the first step of 2 biosynthetic pathways, one leading to arginine and/or urea and the other to pyrimidine nucleotides. The small subunit (glutamine amidotransferase) binds and cleaves glutamine to supply the large subunit with the substrate ammonia. In Methanocaldococcus jannaschii (strain ATCC 43067 / DSM 2661 / JAL-1 / JCM 10045 / NBRC 100440) (Methanococcus jannaschii), this protein is Carbamoyl phosphate synthase small chain.